Consider the following 994-residue polypeptide: Alanine--tRNA ligase, chloroplastic/mitochondrial (994 aa).

The tract at residues 1–29 (MGGLKLPPQTLHGIHGGRRPLTAPSSKPS) is disordered. Residues His-672, His-676, Cys-774, and His-778 each contribute to the Zn(2+) site.

This sequence belongs to the class-II aminoacyl-tRNA synthetase family. As to quaternary structure, monomer. Zn(2+) is required as a cofactor.

The protein localises to the plastid. It localises to the chloroplast. The protein resides in the mitochondrion. It catalyses the reaction tRNA(Ala) + L-alanine + ATP = L-alanyl-tRNA(Ala) + AMP + diphosphate. Functionally, catalyzes the attachment of alanine to tRNA(Ala) in a two-step reaction: alanine is first activated by ATP to form Ala-AMP and then transferred to the acceptor end of tRNA(Ala). Also edits incorrectly charged tRNA(Ala) via its editing domain. The sequence is that of Alanine--tRNA ligase, chloroplastic/mitochondrial from Populus trichocarpa (Western balsam poplar).